Reading from the N-terminus, the 165-residue chain is Methyl-coenzyme M reductase II operon protein D (165 aa).

As to quaternary structure, MCR is composed of three subunits: alpha, beta, and gamma. The function of protein D is not known.

The chain is Methyl-coenzyme M reductase II operon protein D (mrtD) from Methanothermus fervidus (strain ATCC 43054 / DSM 2088 / JCM 10308 / V24 S).